The following is a 376-amino-acid chain: Fibromodulin (376 aa).

An N-terminal signal peptide occupies residues 1–18 (MQWASILLLAGLCSLSWA). A Pyrrolidone carboxylic acid modification is found at Q19. Y20, Y38, Y45, Y47, Y50, Y53, Y55, Y63, and Y65 each carry sulfotyrosine. The LRRNT domain occupies 67-105 (SPPQPEPRDCPQECDCPPNFPTAMYCDNRNLKYLPFVPS). LRR repeat units follow at residues 106-127 (RMKYVYFQNNQISSIQEGVFDN), 130-151 (GLLWIALHGNQITSDKVGKKVF), 156-176 (HLERLYLDHNNLTRIPSPLPR), 177-198 (SLRELHLDHNQISRVPNNALEG), 201-222 (NLTALYLHHNEIQEVGSSMKGL), 224-245 (SLILLDLSYNHLRKVPDGLPSA), 246-266 (LEQLYLEHNNVFSVPDSYFRG), and 269-289 (KLLYVRLSHNSLTNNGLASNT). N-linked (GlcNAc...) (keratan sulfate) asparagine glycosylation occurs at N127. N166 is a glycosylation site (N-linked (GlcNAc...) (keratan sulfate) asparagine). The N-linked (GlcNAc...) (keratan sulfate) asparagine glycan is linked to N201. A glycan (N-linked (GlcNAc...) (keratan sulfate) asparagine) is linked at N291. LRR repeat units lie at residues 294–315 (SLLELDLSYNQLQKIPPVSTNL) and 316–335 (ENLYLQGNRINEFSISSFCT). C334 and C367 form a disulfide bridge. N341 carries N-linked (GlcNAc...) asparagine glycosylation. One copy of the LRR 11 repeat lies at 344-365 (KLQVLRLDGNEIKRSAMPADAP).

It belongs to the small leucine-rich proteoglycan (SLRP) family. SLRP class II subfamily. Binds to type I and type II collagen. Post-translationally, binds keratan sulfate chains.

The protein localises to the secreted. Its subcellular location is the extracellular space. The protein resides in the extracellular matrix. Affects the rate of fibrils formation. May have a primary role in collagen fibrillogenesis. This Bos taurus (Bovine) protein is Fibromodulin (FMOD).